Consider the following 775-residue polypeptide: Armadillo-like helical domain-containing protein 4 (775 aa).

The first 47 residues, 1–47, serve as a signal peptide directing secretion; sequence MLQDSITGIVNSFNLFFPSTMSRPTLMPTCVAFCSILFLTLATGCQA. Topologically, residues 48–715 are extracellular; that stretch reads FPKVERRETA…KDKAGYMSGM (668 aa). A glycan (N-linked (GlcNAc...) asparagine) is linked at Asn-76. 3 disordered regions span residues 120–148, 247–273, and 324–366; these read AGLL…PGPS, VPGV…DGQS, and KFES…PSST. Polar residues predominate over residues 129–142; the sequence is GVYSSSEPVVSASE. Residues 324-335 are compositionally biased toward basic and acidic residues; the sequence is KFESISRGRPPE. Asn-476 carries N-linked (GlcNAc...) asparagine glycosylation. The disordered stretch occupies residues 559–669; that stretch reads IPVLGSPMAP…PGITSQEPDI (111 aa). The span at 577–599 shows a compositional bias: polar residues; sequence TISSALPSEGRTSPSISRPNTAA. Residues 606–640 show a composition bias toward acidic residues; it reads LESEEVEDDEDEEDEEDEEEEEEDEEDEEDEEDKE. Residues 716-736 traverse the membrane as a helical segment; the sequence is LVPVGVGIAGALFILGALYSI. At 737-775 the chain is on the cytoplasmic side; it reads KVMNRRRRNGFKRHKRKQREFNSMQDRVMLLADSSEDEF. Ser-770 and Ser-771 each carry phosphoserine.

As to quaternary structure, interacts with IL6ST; this interaction prevents IL6ST protein homodimerization and bridges ARMH4 with IL6R and STAT3 and therefore inhibits phosphorylation of STAT3 at 'Tyr-705'. Interacts (via cytoplasmic tail) with RICTOR; this interaction bridges ARMH4 to the mTORC2 complex and inhibits the mTORC2 kinase activity. As to expression, expressed in bone-marroew cells.

The protein localises to the membrane. May modulate immune response and may play a role in inflammation. Down-modulates STAT3 signaling throught direct interaction with IL6ST, resulting in the inhibition of phosphorylation of STAT3 at 'Tyr-705'. May negatively regulates AKT signaling by modulating the activity of mTORC2 complex through RICTOR interaction. This is Armadillo-like helical domain-containing protein 4 from Mus musculus (Mouse).